Consider the following 258-residue polypeptide: Dehydrodolichyl diphosphate synthase complex subunit nus1 (258 aa).

A helical membrane pass occupies residues 5–21; it reads IFFYLALWVIQSVYGAW.

This sequence belongs to the UPP synthase family. As to quaternary structure, forms an active dehydrodolichyl diphosphate synthase complex with SPAC4D7.04c. Mg(2+) serves as cofactor.

The protein localises to the endoplasmic reticulum membrane. The enzyme catalyses n isopentenyl diphosphate + (2E,6E)-farnesyl diphosphate = a di-trans,poly-cis-polyprenyl diphosphate + n diphosphate. It functions in the pathway protein modification; protein glycosylation. In terms of biological role, with SPAC4D7.04c, forms the dehydrodolichyl diphosphate synthase (DDS) complex, an essential component of the dolichol monophosphate (Dol-P) biosynthetic machinery. Adds multiple copies of isopentenyl pyrophosphate (IPP) to farnesyl pyrophosphate (FPP) to produce dehydrodolichyl diphosphate (Dedol-PP), a precursor of dolichol which is utilized as a sugar carrier in protein glycosylation in the endoplasmic reticulum (ER). The chain is Dehydrodolichyl diphosphate synthase complex subunit nus1 (nus1) from Schizosaccharomyces pombe (strain 972 / ATCC 24843) (Fission yeast).